The following is a 180-amino-acid chain: Small ribosomal subunit protein uS4 (180 aa).

In terms of domain architecture, S4 RNA-binding spans 104-166 (RRLQTIVHRK…PTSPFKNNPP (63 aa)). The segment at 155–180 (FYPTSPFKNNPPTAGQGEVNVEQKGN) is disordered.

The protein belongs to the universal ribosomal protein uS4 family. As to quaternary structure, part of the 30S ribosomal subunit. Contacts protein S5. The interaction surface between S4 and S5 is involved in control of translational fidelity.

One of the primary rRNA binding proteins, it binds directly to 16S rRNA where it nucleates assembly of the body of the 30S subunit. Its function is as follows. With S5 and S12 plays an important role in translational accuracy. The sequence is that of Small ribosomal subunit protein uS4 from Metallosphaera sedula (strain ATCC 51363 / DSM 5348 / JCM 9185 / NBRC 15509 / TH2).